Consider the following 386-residue polypeptide: Succinate--CoA ligase [ADP-forming] subunit beta (386 aa).

Positions 9–244 (KEILRKYGVS…LDEEDPKEIE (236 aa)) constitute an ATP-grasp domain. ATP-binding positions include Lys46, 53 to 55 (GRG), Glu99, Cys102, and Glu107. Residues Asn199 and Asp213 each coordinate Mg(2+). Residues Asn264 and 321-323 (GIM) each bind substrate.

It belongs to the succinate/malate CoA ligase beta subunit family. As to quaternary structure, heterotetramer of two alpha and two beta subunits. Mg(2+) is required as a cofactor.

The catalysed reaction is succinate + ATP + CoA = succinyl-CoA + ADP + phosphate. It catalyses the reaction GTP + succinate + CoA = succinyl-CoA + GDP + phosphate. The protein operates within carbohydrate metabolism; tricarboxylic acid cycle; succinate from succinyl-CoA (ligase route): step 1/1. Functionally, succinyl-CoA synthetase functions in the citric acid cycle (TCA), coupling the hydrolysis of succinyl-CoA to the synthesis of either ATP or GTP and thus represents the only step of substrate-level phosphorylation in the TCA. The beta subunit provides nucleotide specificity of the enzyme and binds the substrate succinate, while the binding sites for coenzyme A and phosphate are found in the alpha subunit. The protein is Succinate--CoA ligase [ADP-forming] subunit beta of Bacillus pumilus (strain SAFR-032).